The sequence spans 627 residues: Probable serine/threonine-protein kinase PknB (627 aa).

Positions Tyr12–Leu275 constitute a Protein kinase domain. ATP is bound by residues Ile18–Val26 and Lys42. Asp136 serves as the catalytic Proton acceptor. The tract at residues Asp304–Lys331 is disordered. The span at Pro307–Ala324 shows a compositional bias: basic and acidic residues. 3 PASTA domains span residues Thr361–Thr428, Asn430–Ser502, and Gly503–Val574. A disordered region spans residues Gln464–Thr490. Residues Ala577–Ser627 form a disordered region. Over residues Ser579–Ser627 the composition is skewed to low complexity.

The protein belongs to the protein kinase superfamily. Ser/Thr protein kinase family.

The catalysed reaction is L-seryl-[protein] + ATP = O-phospho-L-seryl-[protein] + ADP + H(+). It catalyses the reaction L-threonyl-[protein] + ATP = O-phospho-L-threonyl-[protein] + ADP + H(+). The sequence is that of Probable serine/threonine-protein kinase PknB (pknB) from Lactococcus lactis subsp. lactis (strain IL1403) (Streptococcus lactis).